A 207-amino-acid polypeptide reads, in one-letter code: Guanylate kinase (207 aa).

The Guanylate kinase-like domain occupies 3–181 (GLLFVVSAAS…ALHDLESVIT (179 aa)). Residue 10-17 (AASGTGKT) coordinates ATP.

This sequence belongs to the guanylate kinase family.

It is found in the cytoplasm. The enzyme catalyses GMP + ATP = GDP + ADP. Essential for recycling GMP and indirectly, cGMP. The sequence is that of Guanylate kinase from Acinetobacter baylyi (strain ATCC 33305 / BD413 / ADP1).